Here is a 72-residue protein sequence, read N- to C-terminus: Sec-independent protein translocase protein TatA (72 aa).

Residues 1-21 (MPFGLGLPEILVIGVIALLIF) traverse the membrane as a helical segment. Positions 41–72 (KSGVSDEPAPQQSASKETAPNPPQSLPSGKDS) are disordered.

The protein belongs to the TatA/E family. As to quaternary structure, forms a complex with TatC.

The protein localises to the cell inner membrane. In terms of biological role, part of the twin-arginine translocation (Tat) system that transports large folded proteins containing a characteristic twin-arginine motif in their signal peptide across membranes. TatA could form the protein-conducting channel of the Tat system. The polypeptide is Sec-independent protein translocase protein TatA (Gloeobacter violaceus (strain ATCC 29082 / PCC 7421)).